The chain runs to 323 residues: tRNA dimethylallyltransferase (323 aa).

12 to 19 provides a ligand contact to ATP; sequence GPTAAGKT. Substrate is bound at residue 14–19; the sequence is TAAGKT. 2 interaction with substrate tRNA regions span residues 37-40 and 161-165; these read DSAL and QRLMR.

Belongs to the IPP transferase family. As to quaternary structure, monomer. The cofactor is Mg(2+).

The enzyme catalyses adenosine(37) in tRNA + dimethylallyl diphosphate = N(6)-dimethylallyladenosine(37) in tRNA + diphosphate. Its function is as follows. Catalyzes the transfer of a dimethylallyl group onto the adenine at position 37 in tRNAs that read codons beginning with uridine, leading to the formation of N6-(dimethylallyl)adenosine (i(6)A). The protein is tRNA dimethylallyltransferase of Pseudomonas aeruginosa (strain LESB58).